The following is a 592-amino-acid chain: Threonine--tRNA ligase (592 aa).

The interval 193-488 (DHRKLGPALG…LIEHYGGAFP (296 aa)) is catalytic. Residues C284, H335, and H465 each contribute to the Zn(2+) site.

This sequence belongs to the class-II aminoacyl-tRNA synthetase family. As to quaternary structure, homodimer. Zn(2+) is required as a cofactor.

It localises to the cytoplasm. It carries out the reaction tRNA(Thr) + L-threonine + ATP = L-threonyl-tRNA(Thr) + AMP + diphosphate + H(+). Catalyzes the attachment of threonine to tRNA(Thr) in a two-step reaction: L-threonine is first activated by ATP to form Thr-AMP and then transferred to the acceptor end of tRNA(Thr). Also edits incorrectly charged L-seryl-tRNA(Thr). The chain is Threonine--tRNA ligase from Treponema pallidum (strain Nichols).